A 197-amino-acid polypeptide reads, in one-letter code: Imidazoleglycerol-phosphate dehydratase (197 aa).

Belongs to the imidazoleglycerol-phosphate dehydratase family.

It is found in the cytoplasm. It carries out the reaction D-erythro-1-(imidazol-4-yl)glycerol 3-phosphate = 3-(imidazol-4-yl)-2-oxopropyl phosphate + H2O. The protein operates within amino-acid biosynthesis; L-histidine biosynthesis; L-histidine from 5-phospho-alpha-D-ribose 1-diphosphate: step 6/9. In Chromohalobacter salexigens (strain ATCC BAA-138 / DSM 3043 / CIP 106854 / NCIMB 13768 / 1H11), this protein is Imidazoleglycerol-phosphate dehydratase.